A 117-amino-acid chain; its full sequence is DNA-directed RNA polymerase subunit omega (117 aa).

The span at 96–105 (KEEAEEEAKQ) shows a compositional bias: basic and acidic residues. Residues 96–117 (KEEAEEEAKQKNSRAAKAAAAE) are disordered. Positions 108 to 117 (SRAAKAAAAE) are enriched in low complexity.

It belongs to the RNA polymerase subunit omega family. In terms of assembly, the RNAP catalytic core consists of 2 alpha, 1 beta, 1 beta' and 1 omega subunit. When a sigma factor is associated with the core the holoenzyme is formed, which can initiate transcription.

It catalyses the reaction RNA(n) + a ribonucleoside 5'-triphosphate = RNA(n+1) + diphosphate. In terms of biological role, promotes RNA polymerase assembly. Latches the N- and C-terminal regions of the beta' subunit thereby facilitating its interaction with the beta and alpha subunits. In Lactococcus lactis subsp. cremoris (strain MG1363), this protein is DNA-directed RNA polymerase subunit omega.